The sequence spans 3163 residues: Genome polyprotein (3163 aa).

The Peptidase S30 domain occupies 219–362; the sequence is KMSDQGVDML…KTMSLKIVHF (144 aa). Residues H270, D279, and S313 each act as for P1 proteinase activity in the active site. The Involved in interaction with stylet and aphid transmission motif lies at 414–417; that stretch reads KITC. The Involved in virions binding and aphid transmission motif lies at 672-674; it reads PTK. The region spanning 698–820 is the Peptidase C6 domain; sequence MYIAKEGYCY…ESSLKHYRVG (123 aa). Residues C706 and H779 each act as for helper component proteinase activity in the active site. The Helicase ATP-binding domain maps to 1300–1452; sequence KIAHESDKDI…TQYPVSISTE (153 aa). 1313–1320 provides a ligand contact to ATP; sequence GAVGSGKS. The DEAH box motif lies at 1402-1405; it reads DECH. The region spanning 1471 to 1630 is the Helicase C-terminal domain; it reads DVISKGDNIL…GLPVITNNVS (160 aa). Residues 1871–1888 lie on the Cytoplasmic side of the membrane; sequence STNEMSKFLQLKGKWNKT. The chain crosses the membrane as a helical span at residues 1889–1909; that stretch reads LITRDVLVICGVLGGGVWMVV. Residues 1910–1923 are Lumenal-facing; the sequence is QHFRSKVSEPVTHE. The short motif at 1964–1971 is the Nuclear localization signal element; sequence KKGKSKGR. Residues 1983-2017 form a binding to host eIF(iso)4E region; the sequence is INMYGFDPEDFSAVRFVDPLTGATLDDNPFTDITL. At Y1986 the chain carries O-(5'-phospho-RNA)-tyrosine. Positions 2116 to 2334 constitute a Peptidase C4 domain; sequence SNSMFRGLRD…ISWGSLNIQA (219 aa). Active-site for nuclear inclusion protein A activity residues include H2161, D2196, and C2266. One can recognise a RdRp catalytic domain in the interval 2600 to 2724; the sequence is WVYCDADGSQ…SVHPEYEYIL (125 aa). The disordered stretch occupies residues 2883–2934; it reads DLTEEQKQAEKEKKEREKAEKERERQKQLAFKKGKDVAQEEGKRDKEVNAGT. Over residues 2886 to 2930 the composition is skewed to basic and acidic residues; sequence EEQKQAEKEKKEREKAEKERERQKQLAFKKGKDVAQEEGKRDKEV.

Belongs to the potyviridae genome polyprotein family. Interacts with host eIF4E protein (via cap-binding region); this interaction mediates the translation of the VPg-viral RNA conjugates. Part of a complex that comprises VPg, RNA, host EIF4E and EIF4G; this interaction mediates the translation of the VPg-viral RNA conjugates. As to quaternary structure, interacts, via N-terminal region, with host Sec24a protein in COPII-coated vesicles. This binding triggers the formation of host endoplasmic reticulum (ER)-derived viral vesicles involved in cell-to-cell viral movement. Post-translationally, VPg is uridylylated by the polymerase and is covalently attached to the 5'-end of the genomic RNA. This uridylylated form acts as a nucleotide-peptide primer for the polymerase. In terms of processing, potyviral RNA is expressed as two polyproteins which undergo post-translational proteolytic processing. Genome polyprotein is processed by NIa-pro, P1 and HC-pro proteinases resulting in the production of at least ten individual proteins. P3N-PIPO polyprotein is cleaved by P1 and HC-pro proteinases resulting in the production of three individual proteins. The P1 proteinase and the HC-pro cleave only their respective C-termini autocatalytically. 6K1 is essential for proper proteolytic separation of P3 from CI.

It localises to the host cytoplasm. It is found in the host nucleus. Its subcellular location is the host cytoplasmic vesicle. The protein resides in the host membrane. The protein localises to the virion. It carries out the reaction RNA(n) + a ribonucleoside 5'-triphosphate = RNA(n+1) + diphosphate. The enzyme catalyses Hydrolyzes glutaminyl bonds, and activity is further restricted by preferences for the amino acids in P6 - P1' that vary with the species of potyvirus, e.g. Glu-Xaa-Xaa-Tyr-Xaa-Gln-|-(Ser or Gly) for the enzyme from tobacco etch virus. The natural substrate is the viral polyprotein, but other proteins and oligopeptides containing the appropriate consensus sequence are also cleaved.. The catalysed reaction is Hydrolyzes a Gly-|-Gly bond at its own C-terminus, commonly in the sequence -Tyr-Xaa-Val-Gly-|-Gly, in the processing of the potyviral polyprotein.. Its function is as follows. Cysteine protease that cleaves a Gly-Gly dipeptide at its own C-terminus. Required for aphid transmission and also has proteolytic activity. Interacts with virions and aphid stylets. Acts as a suppressor of RNA-mediated gene silencing, also known as post-transcriptional gene silencing (PTGS), a mechanism of plant viral defense that limits the accumulation of viral RNAs. May have RNA-binding activity. Has helicase activity. It may be involved in replication. Functionally, indispensable for virus replication. In terms of biological role, responsible for the formation of peripheral motile host endoplasmic reticulum (ER)-derived viral vesicles called 'viral factories', seat of the viral RNA (vRNA) replication and carrying vRNA to plasmodesmata for delivery into adjacent non-infected cells; this process relies on host Sec24a-binding. Its function is as follows. Mediates the cap-independent, EIF4E-dependent translation of viral genomic RNAs. Binds to the cap-binding site of host EIF4E and thus interferes with the host EIF4E-dependent mRNA export and translation. VPg-RNA directly binds EIF4E and is a template for transcription. Also forms trimeric complexes with EIF4E-EIF4G, which are templates for translation. Has RNA-binding and proteolytic activities. Functionally, RNA-dependent RNA polymerase that ensures transcription and replication of viral RNA (vRNA). In terms of biological role, involved in aphid transmission, cell-to-cell and systemis movement, encapsidation of the viral RNA and in the regulation of viral RNA amplification. The polypeptide is Genome polyprotein (Brassica (TuMV)).